The sequence spans 322 residues: MRVPFNDKVWAGRSDDGEAGDTRRVFNQVTPFGSAVRVQHDAPVIVGFSSDEGVRRNQGRIGAAHAPMELRRVLAGLPAKTAMVALADAGDVVCDDGDLEAAQAELADVVSEVLAGGGRPLVLGGGHEVAWGTYSGLRLHQQREAENEATLLISRKLLIINFDAHFDLRQKRPANSGTPFDQIALDCAERGVPFNYACFGISDLSNTASLFAHAERLGVHYVFDVDMQETQLPQRLNELQKLLDAADDVYLTIDLDVLPAATAPGVSAPAALGVPLSVIEAMVLRVRASGKLRVADIAEYNPTLDQDRRTARVAARLAYRLL.

Residues His-127, Asp-163, His-165, Asp-167, Asp-254, and Asp-256 each contribute to the Mn(2+) site.

It belongs to the arginase family. The cofactor is Mn(2+).

It carries out the reaction N-formimidoyl-L-glutamate + H2O = formamide + L-glutamate. It participates in amino-acid degradation; L-histidine degradation into L-glutamate; L-glutamate from N-formimidoyl-L-glutamate (hydrolase route): step 1/1. Functionally, catalyzes the conversion of N-formimidoyl-L-glutamate to L-glutamate and formamide. The protein is Formimidoylglutamase of Paraburkholderia xenovorans (strain LB400).